The sequence spans 298 residues: Plasmodesmata-located protein 7 (298 aa).

An N-terminal signal peptide occupies residues 1–30 (MPMAKLRNIIKTLSIFFFLIAATAPSLSSA). The Extracellular portion of the chain corresponds to 31–258 (TSATDTFVFG…YKTNYGGEKT (228 aa)). Gnk2-homologous domains lie at 35-139 (DTFV…NISF) and 140-240 (LGQE…TDGA). Intrachain disulfides connect cysteine 42–cysteine 117, cysteine 93–cysteine 102, cysteine 105–cysteine 130, cysteine 152–cysteine 218, cysteine 194–cysteine 203, and cysteine 206–cysteine 231. A helical membrane pass occupies residues 259–279 (FAIIIGLLAAVVLLIIFLLFL). A necessary and sufficient for plasmodesmal targeting region spans residues 259–279 (FAIIIGLLAAVVLLIIFLLFL). At 280–298 (RGVCSRGGDFSILHSFTLI) the chain is on the cytoplasmic side.

The protein belongs to the cysteine-rich repeat secretory protein family. Plasmodesmata-located proteins (PDLD) subfamily. (Microbial infection) Interacts with Grapevine fanleaf virus (GFLV) 2B-MP. In terms of tissue distribution, highly expressed in lateral root and elongation zone.

It localises to the cell membrane. The protein localises to the cell junction. It is found in the plasmodesma. Its function is as follows. Modulates cell-to-cell trafficking. The chain is Plasmodesmata-located protein 7 from Arabidopsis thaliana (Mouse-ear cress).